The primary structure comprises 201 residues: Casparian strip membrane protein 2 (201 aa).

Residues 1–38 (MKSTGEATAINIGETKSASATTVATTKAIQHPKAGLKR) lie on the Cytoplasmic side of the membrane. The helical transmembrane segment at 39-59 (GLAIFDFILRLSAIGAALAAT) threads the bilayer. Residues 60 to 89 (TTMGTTDQTLPFFTQFFQFQASYDDLPAFS) lie on the Extracellular side of the membrane. Residues 90 to 110 (FFVIANAIASGYLFLSLPFSI) form a helical membrane-spanning segment. Over 111-129 (VCIVRPHAMGARLLLVICD) the chain is Cytoplasmic. Residues 130–150 (TVMVALTIAAAAAAAAIVYLA) form a helical membrane-spanning segment. Residues 151-175 (HNGNSNANWVAICQQFDDFCQSVSG) are Extracellular-facing. A helical transmembrane segment spans residues 176–196 (AVVASFIAAVLFMLMIVLSAF). The Cytoplasmic portion of the chain corresponds to 197 to 201 (SLRKH).

Belongs to the Casparian strip membrane proteins (CASP) family. Homodimer and heterodimers.

It localises to the cell membrane. In terms of biological role, regulates membrane-cell wall junctions and localized cell wall deposition. Required for establishment of the Casparian strip membrane domain (CSD) and the subsequent formation of Casparian strips, a cell wall modification of the root endodermis that determines an apoplastic barrier between the intraorganismal apoplasm and the extraorganismal apoplasm and prevents lateral diffusion. This is Casparian strip membrane protein 2 from Vitis vinifera (Grape).